The sequence spans 168 residues: Peptide deformylase (168 aa).

The Fe cation site is built by Cys-91 and His-133. The active site involves Glu-134. Position 137 (His-137) interacts with Fe cation.

It belongs to the polypeptide deformylase family. Requires Fe(2+) as cofactor.

It carries out the reaction N-terminal N-formyl-L-methionyl-[peptide] + H2O = N-terminal L-methionyl-[peptide] + formate. Functionally, removes the formyl group from the N-terminal Met of newly synthesized proteins. Requires at least a dipeptide for an efficient rate of reaction. N-terminal L-methionine is a prerequisite for activity but the enzyme has broad specificity at other positions. The chain is Peptide deformylase from Endomicrobium trichonymphae.